Consider the following 420-residue polypeptide: Glutamyl-tRNA reductase (420 aa).

Substrate-binding positions include 49-52 (TCNR), S107, 112-114 (EPQ), and Q118. C50 functions as the Nucleophile in the catalytic mechanism. 187–192 (GAGETI) is an NADP(+) binding site.

It belongs to the glutamyl-tRNA reductase family. Homodimer.

It catalyses the reaction (S)-4-amino-5-oxopentanoate + tRNA(Glu) + NADP(+) = L-glutamyl-tRNA(Glu) + NADPH + H(+). The protein operates within porphyrin-containing compound metabolism; protoporphyrin-IX biosynthesis; 5-aminolevulinate from L-glutamyl-tRNA(Glu): step 1/2. In terms of biological role, catalyzes the NADPH-dependent reduction of glutamyl-tRNA(Glu) to glutamate 1-semialdehyde (GSA). In Photobacterium profundum (strain SS9), this protein is Glutamyl-tRNA reductase.